Consider the following 37-residue polypeptide: Cytochrome b6-f complex subunit 5 (37 aa).

The helical transmembrane segment at 5-25 (LLSGIVLGMITVSAFGLFVAA) threads the bilayer.

The protein belongs to the PetG family. As to quaternary structure, the 4 large subunits of the cytochrome b6-f complex are cytochrome b6, subunit IV (17 kDa polypeptide, PetD), cytochrome f and the Rieske protein, while the 4 small subunits are PetG, PetL, PetM and PetN. The complex functions as a dimer.

It is found in the plastid. The protein resides in the chloroplast thylakoid membrane. Functionally, component of the cytochrome b6-f complex, which mediates electron transfer between photosystem II (PSII) and photosystem I (PSI), cyclic electron flow around PSI, and state transitions. PetG is required for either the stability or assembly of the cytochrome b6-f complex. This is Cytochrome b6-f complex subunit 5 from Thalassiosira pseudonana (Marine diatom).